The chain runs to 720 residues: Engulfment and cell motility protein 2 (720 aa).

Y48 is modified (phosphotyrosine). The region spanning 310–484 (QAQRDIIFEL…QVVREQITRA (175 aa)) is the ELMO domain. Residue S503 is modified to Phosphoserine. A PH domain is found at 553 to 674 (SSFRKIGNRR…LLGKDMSSEL (122 aa)). The short motif at 700 to 707 (PEAPPPVP) is the SH3-binding element. A Phosphotyrosine modification is found at Y717.

As to quaternary structure, interacts directly with the SH3-domain of DOCK1 via its SH3-binding site. Probably forms a heterotrimeric complex with DOCK1 and RAC1. Interacts with ARHGEF16, DOCK4 and EPHA2; mediates activation of RAC1 by EPHA2. Interacts with ADGRB3. Interacts with AUTS2; the interaction is direct.

It is found in the cytoplasm. The protein localises to the cytosol. Its subcellular location is the membrane. Involved in cytoskeletal rearrangements required for phagocytosis of apoptotic cells and cell motility. Acts in association with DOCK1 and CRK. Was initially proposed to be required in complex with DOCK1 to activate Rac Rho small GTPases. May enhance the guanine nucleotide exchange factor (GEF) activity of DOCK1. The sequence is that of Engulfment and cell motility protein 2 (ELMO2) from Bos taurus (Bovine).